The primary structure comprises 770 residues: MAQWNQLQQLDTRYLEQLHQLYSDSFPMELRQFLAPWIESQDWAYAASKESHATLVFHNLLGEIDQQYSRFLQESNVLYQHNLRRIKQFLQSRYLEKPMEIARIVARCLWEESRLLQTAATAAQQGGQANHPTAAVVTEKQQMLEQHLQDVRKRVQDLEQKMKVVENLQDDFDFNYKTLKSQGDMQDLNGNNQSVTRQKMQQLEQMLTALDQMRRSIVSELAGLLSAMEYVQKTLTDEELADWKRRQQIACIGGPPNICLDRLENWITSLAESQLQTRQQIKKLEELQQKVSYKGDPIVQHRPMLEERIVELFRNLMKSAFVVERQPCMPMHPDRPLVIKTGVQFTTKVRLLVKFPELNYQLKIKVCIDKDSGDVAALRGSRKFNILGTNTKVMNMEESNNGSLSAEFKHLTLREQRCGNGGRANCDASLIVTEELHLITFETEVYHQGLKIDLETHSLPVVVISNICQMPNAWASILWYNMLTNNPKNVNFFTKPPIGTWDQVAEVLSWQFSSTTKRGLSIEQLSTLAEKLLGPGVNYSGCQITWAKFCKENMAGKGFSFWVWLDNIIDLVKKYILALWNEGYIMGFISKERERAILSTKPPGTFLLRFSESSKEGGVTFTWVEKDISGKTQIQSVEPYTKQQLNNMSFAEIIMGYKIMDATNILVSPLVYLYPDIPKEEAFGKYCRPESQEHPEADPGSAAPYLKTKFICVTPTTCSNTIDLPMSPRTLDSLMQFGNNGEGAEPSAGGQFESLTFDMELNSECATSPM.

Alanine 2 carries the N-acetylalanine modification. N6-acetyllysine is present on residues lysine 49 and lysine 87. The Essential for nuclear import motif lies at 150 to 162 (DVRKRVQDLEQKM). In terms of domain architecture, SH2 spans 580–670 (WNEGYIMGFI…DATNILVSPL (91 aa)). Allysine; alternate occurs at positions 601, 615, and 631. N6-acetyllysine; alternate occurs at positions 601, 615, and 631. Tyrosine 640 is modified (phosphotyrosine; by TYK2). The residue at position 685 (lysine 685) is an Allysine; alternate. N6-acetyllysine; alternate is present on lysine 685. Tyrosine 705 is subject to Phosphotyrosine; by FER and PTK6. N6-acetyllysine is present on lysine 707. Threonine 714 is subject to Phosphothreonine. Position 727 is a phosphoserine; by DYRK2, NLK, NEK6, IRAK1, RPS6KA5, ZIPK/DAPK3 and PKC/PRKCE (serine 727).

Belongs to the transcription factor STAT family. In terms of assembly, forms a homodimer or a heterodimer with a related family member (at least STAT1). Component of a promoter-binding complex composed of STAT3, NFATC3 and NFATC4; complex formation is enhanced by calcineurin. Interacts with IL31RA, NCOA1, PELP1, SIPAR, SOCS7, STATIP1 and TMF1. Interacts with IL23R in presence of IL23. Interacts (via SH2 domain) with NLK. Interacts with ARL2BP; the interaction is enhanced by LIF and JAK1 expression. Interacts with KPNA4 and KPNA5; KPNA4 may be the primary mediator of nuclear import. Interacts with CAV2; the interaction is increased on insulin-induced tyrosine phosphorylation of CAV2 and leads to STAT3 activation. Interacts with ARL2BP; interaction is enhanced with ARL2. Interacts with NEK6. Binds to CDK9 when activated and nuclear. Interacts with BMX. Interacts with ZIPK/DAPK3. Interacts with PIAS3; the interaction occurs on stimulation by IL6, CNTF or OSM and inhibits the DNA binding activity of STAT3. In prostate cancer cells, interacts with PRKCE and promotes DNA binding activity of STAT3. Interacts with STMN3, antagonizing its microtubule-destabilizing activity. Interacts with the 'Lys-129' acetylated form of BIRC5/survivin. Interacts with FER. Interacts (via SH2 domain) with EIF2AK2/PKR (via the kinase catalytic domain). Interacts with INPP5F; the interaction is independent of STAT3 Tyr-705 phosphorylation status. Interacts with FGFR4. Interacts with OCIAD1 and OCIAD2. Interacts (unphosphorylated or phosphorylated at Ser-727) with PHB1. Interacts and may form heterodimers with NHLH1. Found in a complex with SLC39A6, SLC39A10 and with the 'Ser-727' phosphorylated form of STAT3 throughout mitosis. Interacts (when acetylated) with EP300 (via bromo domain); interaction takes place following STAT3 acetylation by EP300 and promotes enhanceosome assembly. Interacts (when acetylated) with BRD2 (via bromo domain); interaction promotes STAT3 recruitment to chromatin and T-helper Th17 cell differentiation. Interacts with FAM220A/SIPAR; the interaction occurs in both the nucleus and the cytoplasm, is enhanced by IL6 and promotes STAT3 dephosphorylation. Interacts in both unphosphorylated and phosphorylated forms with FAM220A but interacts preferentially in the phosphorylated form in the nucleus. Interacts with PTPN2; the interaction is promoted by FAM220A and leads to STAT3 dephosphorylation which negatively regulates STAT3 transcriptional activator activity. Post-translationally, activated through tyrosine phosphorylation by BMX. Tyrosine phosphorylated in response to IL6, IL11, CNTF, LIF, KITLG/SCF, CSF1, EGF, PDGF, IFN-alpha and OSM. Activated KIT promotes phosphorylation on tyrosine residues and subsequent translocation to the nucleus. Tyrosine phosphorylated in response to constitutively activated FGFR1, FGFR2, FGFR3 and FGFR4. Phosphorylated on serine upon DNA damage, probably by ATM or ATR. Serine phosphorylation is important for the formation of stable DNA-binding STAT3 homodimers and maximal transcriptional activity. ARL2BP may participate in keeping the phosphorylated state of STAT3 within the nucleus. Tyrosine phosphorylated upon stimulation with EGF. Upon LPS challenge, phosphorylated within the nucleus by IRAK1. Phosphorylated on Ser-727 by RPS6KA5. Dephosphorylation on tyrosine residues by PTPN2 negatively regulates IL6/interleukin-6 signaling. Phosphorylation at Tyr-705 by FER, isoform M2 of PKM (PKM2) or PTK6 leads to an increase of its transcriptional activity. Phosphorylation at Tyr-705 is increased in the presence of calcineurin. Phosphorylation at Tyr-640 by TYK2 negatively regulates transcriptional activity. Acetylated on lysine residues by EP300/p300, promoting its activation. Acetylation at Lys-49 and Lys-87 by EP300/p300 promotes its activation. Acetylation at Lys-87 by EP300/p300 promotes its association with BRD2 and recruitment to chromatin. Deacetylated at Lys-49 and Lys-87 by HDAC1. Acetylation at Lys-685 by EP300/p300 promotes its homodimerization and activation. Deacetylated at Lys-685 by HDAC3. Acetylated on lysine residues by CREBBP. Deacetylation by LOXL3 leads to disrupt STAT3 dimerization and inhibit STAT3 transcription activity. Oxidation of lysine residues to allysine on STAT3 preferentially takes place on lysine residues that are acetylated. In terms of processing, some lysine residues are oxidized to allysine by LOXL3, leading to disrupt STAT3 dimerization and inhibit STAT3 transcription activity. Oxidation of lysine residues to allysine on STAT3 preferentially takes place on lysine residues that are acetylated. As to expression, detected in lung, heart, oviduct, ovary, uterus and kidney (at protein level). Detected in ovary, oviduct, and at lower levels in uterus and lung.

It is found in the cytoplasm. Its subcellular location is the nucleus. In terms of biological role, signal transducer and transcription activator that mediates cellular responses to interleukins, KITLG/SCF, LEP and other growth factors. Once activated, recruits coactivators, such as NCOA1 or MED1, to the promoter region of the target gene. May mediate cellular responses to activated FGFR1, FGFR2, FGFR3 and FGFR4. Upon activation of IL6ST/gp130 signaling by interleukin-6 (IL6), binds to the IL6-responsive elements identified in the promoters of various acute-phase protein genes. Activated by IL31 through IL31RA. Acts as a regulator of inflammatory response by regulating differentiation of naive CD4(+) T-cells into T-helper Th17 or regulatory T-cells (Treg): acetylation promotes its transcription activity and cell differentiation while deacetylation and oxidation of lysine residues by LOXL3 inhibits differentiation. Involved in cell cycle regulation by inducing the expression of key genes for the progression from G1 to S phase, such as CCND1. Mediates the effects of LEP on melanocortin production, body energy homeostasis and lactation. May play an apoptotic role by transctivating BIRC5 expression under LEP activation. Cytoplasmic STAT3 represses macroautophagy by inhibiting EIF2AK2/PKR activity. Plays a crucial role in basal beta cell functions, such as regulation of insulin secretion. Following JAK/STAT signaling activation and as part of a complex with NFATC3 and NFATC4, binds to the alpha-beta E4 promoter region of CRYAB and activates transcription in cardiomyocytes. Plays an important role in host defense in methicillin-resistant S.aureus lung infection by regulating the expression of the antimicrobial lectin REG3G. The sequence is that of Signal transducer and activator of transcription 3 (STAT3) from Sus scrofa (Pig).